The sequence spans 342 residues: uncharacterized protein (342 aa).

Belongs to the proline racemase family.

This is an uncharacterized protein from Brucella canis (strain ATCC 23365 / NCTC 10854 / RM-666).